The sequence spans 120 residues: Large ribosomal subunit protein uL18 (120 aa).

The protein belongs to the universal ribosomal protein uL18 family. Part of the 50S ribosomal subunit; part of the 5S rRNA/L5/L18/L25 subcomplex. Contacts the 5S and 23S rRNAs.

Its function is as follows. This is one of the proteins that bind and probably mediate the attachment of the 5S RNA into the large ribosomal subunit, where it forms part of the central protuberance. The sequence is that of Large ribosomal subunit protein uL18 from Brevibacillus brevis (strain 47 / JCM 6285 / NBRC 100599).